The primary structure comprises 449 residues: MSTRRTAAALLAAAAVAVGGLTALTTTAAQAAPGCRVDYAVTNQWPGGFGANVTITNLGDPVSSWKLDWTYTAGQRIQQLWNGTASTNGGQVSVTSLPWNGSIPTGGTASFGFNGSWAGSNPTPASFSLNGTTCTGTVPTTSPTPTPTPTTPTPTPTPTPTPTPTVTPQPTSGFYVDPTTQGYRAWQAASGTDKALLEKIALTPQAYWVGNWADASHAQAEVADYTGRAVAAGKTPMLVVYAIPGRDCGSHSGGGVSESEYARWVDTVAQGIKGNPIVILEPDALAQLGDCSGQGDRVGFLKYAAKSLTLKGARVYIDAGHAKWLSVDTPVNRLNQVGFEYAVGFALNTSNYQTTADSKAYGQQISQRLGGKKFVIDTSRNGNGSNGEWCNPRGRALGERPVAVNDGSGLDALLWVKLPGESDGACNGGPAAGQWWQEIALEMARNARW.

The segment at residues 1–31 is a signal peptide (tat-type signal); sequence MSTRRTAAALLAAAAVAVGGLTALTTTAAQA. The CBM2 domain maps to 32–137; the sequence is APGCRVDYAV…SLNGTTCTGT (106 aa). An intrachain disulfide couples C35 to C134. Residues 127 to 170 are disordered; that stretch reads FSLNGTTCTGTVPTTSPTPTPTPTTPTPTPTPTPTPTPTVTPQP. Low complexity predominate over residues 132–141; sequence TTCTGTVPTT. Residues 139-168 are linker ('hinge') (Pro-Thr box); it reads PTTSPTPTPTPTTPTPTPTPTPTPTPTVTP. A compositionally biased stretch (pro residues) spans 142-167; the sequence is SPTPTPTPTTPTPTPTPTPTPTPTVT. The active site involves D247. 2 disulfide bridges follow: C248-C291 and C390-C426. Catalysis depends on D283, which acts as the Proton donor. D423 (nucleophile) is an active-site residue. The tract at residues 438 to 449 is catalytic; that stretch reads EIALEMARNARW.

It belongs to the glycosyl hydrolase 6 (cellulase B) family. The linker region (also termed 'hinge') may be a potential site for proteolysis. Post-translationally, predicted to be exported by the Tat system. The position of the signal peptide cleavage has not been experimentally proven.

The enzyme catalyses Endohydrolysis of (1-&gt;4)-beta-D-glucosidic linkages in cellulose, lichenin and cereal beta-D-glucans.. The biological conversion of cellulose to glucose generally requires three types of hydrolytic enzymes: (1) Endoglucanases which cut internal beta-1,4-glucosidic bonds; (2) Exocellobiohydrolases that cut the disaccharide cellobiose from the non-reducing end of the cellulose polymer chain; (3) Beta-1,4-glucosidases which hydrolyze the cellobiose and other short cello-oligosaccharides to glucose. The chain is Endoglucanase A (cenA) from Cellulomonas fimi.